Here is a 478-residue protein sequence, read N- to C-terminus: Protein nucleotidyltransferase YdiU (478 aa).

ATP-binding residues include Gly84, Gly86, Arg87, Lys107, Asp119, Gly120, Arg170, and Arg177. The active-site Proton acceptor is the Asp246. Asn247 and Asp256 together coordinate Mg(2+). Asp256 contributes to the ATP binding site.

It belongs to the SELO family. Requires Mg(2+) as cofactor. Mn(2+) serves as cofactor.

It carries out the reaction L-seryl-[protein] + ATP = 3-O-(5'-adenylyl)-L-seryl-[protein] + diphosphate. It catalyses the reaction L-threonyl-[protein] + ATP = 3-O-(5'-adenylyl)-L-threonyl-[protein] + diphosphate. The catalysed reaction is L-tyrosyl-[protein] + ATP = O-(5'-adenylyl)-L-tyrosyl-[protein] + diphosphate. The enzyme catalyses L-histidyl-[protein] + UTP = N(tele)-(5'-uridylyl)-L-histidyl-[protein] + diphosphate. It carries out the reaction L-seryl-[protein] + UTP = O-(5'-uridylyl)-L-seryl-[protein] + diphosphate. It catalyses the reaction L-tyrosyl-[protein] + UTP = O-(5'-uridylyl)-L-tyrosyl-[protein] + diphosphate. In terms of biological role, nucleotidyltransferase involved in the post-translational modification of proteins. It can catalyze the addition of adenosine monophosphate (AMP) or uridine monophosphate (UMP) to a protein, resulting in modifications known as AMPylation and UMPylation. In Escherichia coli (strain K12 / MC4100 / BW2952), this protein is Protein nucleotidyltransferase YdiU.